The sequence spans 263 residues: Acetylglutamate kinase (263 aa).

Substrate-binding positions include 48 to 49 (GG), arginine 70, and asparagine 162.

It belongs to the acetylglutamate kinase family. ArgB subfamily.

It localises to the cytoplasm. The catalysed reaction is N-acetyl-L-glutamate + ATP = N-acetyl-L-glutamyl 5-phosphate + ADP. Its pathway is amino-acid biosynthesis; L-arginine biosynthesis; N(2)-acetyl-L-ornithine from L-glutamate: step 2/4. Its function is as follows. Catalyzes the ATP-dependent phosphorylation of N-acetyl-L-glutamate. In Vibrio vulnificus (strain YJ016), this protein is Acetylglutamate kinase.